Here is a 158-residue protein sequence, read N- to C-terminus: Glutathione peroxidase homolog BsaA (158 aa).

Cysteine 36 is a catalytic residue.

The protein belongs to the glutathione peroxidase family.

This is Glutathione peroxidase homolog BsaA (bsaA) from Staphylococcus aureus (strain COL).